The following is a 111-amino-acid chain: Disintegrin Eo1 subunit 1 (111 aa).

The N-terminal stretch at 1–20 is a signal peptide; sequence MIQVLLVIICLAVFPYQGSS. A propeptide spanning residues 21-46 is cleaved from the precursor; sequence IILESGNVNDFELVYPKKVTVLPTGA. The region spanning 26–111 is the Disintegrin domain; sequence GNVNDFELVY…SDCPRNPWKD (86 aa). 4 cysteine pairs are disulfide-bonded: Cys53/Cys76, Cys67/Cys73, Cys72/Cys97, and Cys85/Cys104. A Cell attachment site; atypical (WGD) motif is present at residues 89–91; that stretch reads WGD. The propeptide occupies 110–111; sequence KD.

It belongs to the disintegrin family. Dimeric disintegrin subfamily. Heterodimer; disulfide-linked. In terms of tissue distribution, expressed by the venom gland.

The protein resides in the secreted. Functionally, poor inhibitor of platelet aggregation. The disintegrin inhibits the adhesion of cells expressing the RGD-dependent integrin alpha-5/beta-1 (ITGA5/ITGB1) to immobilized fibronectin. Inhibition on alpha-IIb/beta-3 (ITGA2B/ITGB3) is low. The chain is Disintegrin Eo1 subunit 1 from Echis ocellatus (Ocellated saw-scaled viper).